The chain runs to 1359 residues: Nuclear protein STH1/NPS1 (1359 aa).

Residue S38 is modified to Phosphoserine. The HSA domain occupies 307–383; the sequence is LERQQLLEKR…AKQRLAALKS (77 aa). Residues 482 to 647 form the Helicase ATP-binding domain; that stretch reads VSLYNNHLNG…WALLNFVLPK (166 aa). 495 to 502 serves as a coordination point for ATP; it reads DEMGLGKT. The DEGH box motif lies at 597 to 600; the sequence is DEGH. The 162-residue stretch at 795 to 956 folds into the Helicase C-terminal domain; the sequence is LLDRVLPKFK…NKSTAEEQEA (162 aa). Positions 1090–1246 are disordered; it reads RERRRLRQNG…TAAKKTKTKS (157 aa). Over residues 1108 to 1126 the composition is skewed to polar residues; that stretch reads LENTPEASETSLIENNSFT. 2 stretches are compositionally biased toward basic residues: residues 1143 to 1154 and 1198 to 1210; these read RSKRRSSRKKRT and KKKKPKLTVKIKL. Over residues 1219–1232 the composition is skewed to basic and acidic residues; that stretch reads NDGKRAEEKPESKS. Positions 1233 to 1246 are enriched in basic residues; sequence PAKKTAAKKTKTKS. The 101-residue stretch at 1257-1357 folds into the Bromo domain; the sequence is KLVEEMREQL…EFTDEWFKEH (101 aa).

This sequence belongs to the SNF2/RAD54 helicase family. In terms of assembly, interacts directly with SFH1, CSE4, histones H3, H4 and H2B, and via its N-terminus, with RSC8. Interacts with LDB7, NPL6 and RTT102. Component of the two forms of the RSC complex composed of at least either RSC1 or RSC2, and ARP7, ARP9, LDB7, NPL6, RSC3, RSC30, RSC4, RSC58, RSC6, RSC8, RSC9, SFH1, STH1, HTL1 and probably RTT102. The complexes interact with histone and histone variant components of centromeric chromatin.

Its subcellular location is the nucleus. It catalyses the reaction ATP + H2O = ADP + phosphate + H(+). Functionally, catalytic component of the chromatin structure-remodeling complex (RSC), which is involved in transcription regulation and nucleosome positioning. RSC is responsible for the transfer of a histone octamer from a nucleosome core particle to naked DNA. The reaction requires ATP and involves an activated RSC-nucleosome intermediate. Remodeling reaction also involves DNA translocation, DNA twist and conformational change. As a reconfigurer of centromeric and flanking nucleosomes, RSC complex is required both for proper kinetochore function in chromosome segregation and, via a PKC1-dependent signaling pathway, for organization of the cellular cytoskeleton. This subunit is the essential ATPase of the complex. It is a DNA translocase capable of nucleosome remodeling. Required for full expression of early meiotic genes. Essential for mitotic growth and repression of CHA1 expression. Also involved in G2 phase control. The sequence is that of Nuclear protein STH1/NPS1 (STH1) from Saccharomyces cerevisiae (strain ATCC 204508 / S288c) (Baker's yeast).